The chain runs to 213 residues: Thiopurine S-methyltransferase (213 aa).

S-adenosyl-L-methionine is bound by residues Trp-10, Leu-45, Glu-66, and Arg-121.

The protein belongs to the class I-like SAM-binding methyltransferase superfamily. TPMT family.

It is found in the cytoplasm. It carries out the reaction S-adenosyl-L-methionine + a thiopurine = S-adenosyl-L-homocysteine + a thiopurine S-methylether.. In Aliivibrio fischeri (strain MJ11) (Vibrio fischeri), this protein is Thiopurine S-methyltransferase.